The primary structure comprises 309 residues: L-aminoadipate-semialdehyde dehydrogenase-phosphopantetheinyl transferase (309 aa).

CoA-binding positions include Arg-47, 86 to 91, and 108 to 111; these read RTSKGK and NISH. The Mg(2+) site is built by Asp-129 and Glu-181. Residue 181-185 participates in CoA binding; the sequence is ESFIK.

It belongs to the P-Pant transferase superfamily. AcpS family. As to quaternary structure, monomer. Mg(2+) is required as a cofactor.

The protein resides in the cytoplasm. The protein localises to the cytosol. It carries out the reaction apo-[ACP] + CoA = holo-[ACP] + adenosine 3',5'-bisphosphate + H(+). The catalysed reaction is apo-[ACP] + acetyl-CoA = acetyl-[ACP] + adenosine 3',5'-bisphosphate + H(+). Its function is as follows. Catalyzes the post-translational modification of target proteins by phosphopantetheine. Can transfer the 4'-phosphopantetheine moiety from coenzyme A, regardless of whether the CoA is presented in the free thiol form or as an acetyl thioester, to a serine residue of a broad range of acceptors including the acyl carrier domain of FASN. This chain is L-aminoadipate-semialdehyde dehydrogenase-phosphopantetheinyl transferase (Aasdhppt), found in Mus musculus (Mouse).